A 494-amino-acid polypeptide reads, in one-letter code: Sugiol synthase (494 aa).

Residues 3–23 (SFSLLAALFFISAATWFISSR) form a helical membrane-spanning segment. Residue Cys437 participates in heme binding.

Belongs to the cytochrome P450 family. Heme is required as a cofactor. In terms of tissue distribution, expressed in roots.

The protein resides in the membrane. It catalyses the reaction ferruginol + 2 reduced [NADPH--hemoprotein reductase] + 2 O2 = sugiol + 2 oxidized [NADPH--hemoprotein reductase] + 3 H2O + 2 H(+). The catalysed reaction is ferruginol + reduced [NADPH--hemoprotein reductase] + O2 = 11-hydroxyferruginol + oxidized [NADPH--hemoprotein reductase] + H2O + H(+). The enzyme catalyses 11-hydroxyferruginol + 2 reduced [NADPH--hemoprotein reductase] + 2 O2 = 11-hydroxysugiol + 2 oxidized [NADPH--hemoprotein reductase] + 3 H2O + 2 H(+). It participates in secondary metabolite biosynthesis; terpenoid biosynthesis. Its function is as follows. Monooxygenase that oxidizes ferruginol to produce sugiol. Oxidizes ferruginol at C-12 to produce 11-hydroxyferruginol. Can oxidize 11-hydroxyferruginol to 11-hydroxysugiol. These products are intermediates in tanshinone biosynthesis. This Salvia miltiorrhiza (Chinese sage) protein is Sugiol synthase.